The sequence spans 232 residues: Putative N-acetylmannosamine-6-phosphate 2-epimerase (232 aa).

The protein belongs to the NanE family.

The catalysed reaction is an N-acyl-D-glucosamine 6-phosphate = an N-acyl-D-mannosamine 6-phosphate. The protein operates within amino-sugar metabolism; N-acetylneuraminate degradation; D-fructose 6-phosphate from N-acetylneuraminate: step 3/5. Converts N-acetylmannosamine-6-phosphate (ManNAc-6-P) to N-acetylglucosamine-6-phosphate (GlcNAc-6-P). This is Putative N-acetylmannosamine-6-phosphate 2-epimerase from Borreliella afzelii (strain PKo) (Borrelia afzelii).